The following is a 538-amino-acid chain: Coiled-coil domain-containing protein 8 (538 aa).

Positions 58–128 are disordered; sequence IMEKSTPHPP…QGPRRGKKVR (71 aa). Positions 119–128 are enriched in basic residues; it reads QGPRRGKKVR. Phosphoserine is present on residues serine 142, serine 146, and serine 261. The segment at 213 to 473 is disordered; it reads WAPRAGPGVG…GTAPGARARK (261 aa). A compositionally biased stretch (basic and acidic residues) spans 301–313; sequence DSQREEAIADQRE. Residues 321-332 show a composition bias toward low complexity; that stretch reads AGAPADQGAEAA. Residues 349-366 adopt a coiled-coil conformation; sequence AEEGAEAADNQREEAADN. 3 stretches are compositionally biased toward basic and acidic residues: residues 357-373, 381-392, and 405-419; these read DNQR…EAPA, DNHREEAADNQR, and DNQR…RERA. 2 stretches are compositionally biased toward low complexity: residues 428 to 438 and 458 to 469; these read QRAQARAGQRA and AAQGTTGTAPGA. The PxLPxI/L motif; mediates interaction with ANKRA2 motif lies at 500-506; that stretch reads PRLPTLP. The stretch at 514–535 forms a coiled coil; sequence EARNLRVLRAEARAEAEQGEQE.

In terms of assembly, component of the 3M complex, composed of core components CUL7, CCDC8 and OBSL1. Interacts (via PxLPxI/L motif) with ANKRA2 (via ankyrin repeats); may link the 3M complex to histone deacetylases including HDAC4 and HDAC5. As to expression, widely expressed with low levels in spleen, skeletal muscle, small intestine, kidney and liver.

It is found in the cytoplasm. The protein localises to the cytoskeleton. It localises to the microtubule organizing center. Its subcellular location is the centrosome. Its function is as follows. Core component of the 3M complex, a complex required to regulate microtubule dynamics and genome integrity. It is unclear how the 3M complex regulates microtubules, it could act by controlling the level of a microtubule stabilizer. Required for localization of CUL7 to the centrosome. In Homo sapiens (Human), this protein is Coiled-coil domain-containing protein 8 (CCDC8).